We begin with the raw amino-acid sequence, 402 residues long: Zinc finger protein 322 (402 aa).

The C2H2-type 1; atypical zinc-finger motif lies at 43 to 65; it reads YQCLECKQNFCENLALIMCERTH. 8 consecutive C2H2-type zinc fingers follow at residues 71–93, 99–121, 127–149, 155–177, 183–205, 211–233, 239–261, and 267–289; these read YKCD…QRIH, YKCS…QRTH, YTCD…QRSH, YLCS…RRTH, FKCL…QRTH, YKCN…KRVH, YKCG…QRVH, and YKCL…QATH. Residues 293–315 form a C2H2-type 10; degenerate zinc finger; sequence FKCLEYEKSFNCSSDLIVHQRIH. The segment at 351-373 adopts a C2H2-type 11; degenerate zinc-finger fold; that stretch reads YKYTVCDKSFHQSSALLQHQTVH. Phosphoserine is present on Ser-391.

The protein belongs to the krueppel C2H2-type zinc-finger protein family. In terms of assembly, interacts with POU5F1.

It localises to the cytoplasm. It is found in the nucleus. Its function is as follows. Transcriptional activator. Important for maintenance of pluripotency in embryonic stem cells. Binds directly to the POU5F1 distal enhancer and the NANOG proximal promoter, and enhances expression of both genes. Can also bind to numerous other gene promoters and regulates expression of many other pluripotency factors, either directly or indirectly. Promotes inhibition of MAPK signaling during embryonic stem cell differentiation. The sequence is that of Zinc finger protein 322 (ZNF322) from Macaca fascicularis (Crab-eating macaque).